A 307-amino-acid polypeptide reads, in one-letter code: Aspartate carbamoyltransferase catalytic subunit (307 aa).

Carbamoyl phosphate contacts are provided by R49 and T50. L-aspartate is bound at residue K77. 3 residues coordinate carbamoyl phosphate: R99, H127, and Q130. Positions 160 and 211 each coordinate L-aspartate. Carbamoyl phosphate contacts are provided by A250 and P251.

The protein belongs to the aspartate/ornithine carbamoyltransferase superfamily. ATCase family. As to quaternary structure, heterododecamer (2C3:3R2) of six catalytic PyrB chains organized as two trimers (C3), and six regulatory PyrI chains organized as three dimers (R2).

The enzyme catalyses carbamoyl phosphate + L-aspartate = N-carbamoyl-L-aspartate + phosphate + H(+). It participates in pyrimidine metabolism; UMP biosynthesis via de novo pathway; (S)-dihydroorotate from bicarbonate: step 2/3. Its function is as follows. Catalyzes the condensation of carbamoyl phosphate and aspartate to form carbamoyl aspartate and inorganic phosphate, the committed step in the de novo pyrimidine nucleotide biosynthesis pathway. This is Aspartate carbamoyltransferase catalytic subunit from Bacillus pumilus (strain SAFR-032).